The chain runs to 791 residues: uncharacterized protein (791 aa).

The next 4 helical transmembrane spans lie at 104 to 124 (MWIL…FFLM), 131 to 151 (IAAI…YYII), 177 to 197 (ACLY…TLII), and 226 to 246 (WSGL…PSVL). N265 carries an N-linked (GlcNAc...) asparagine glycan. The next 8 helical transmembrane spans lie at 274 to 294 (FFIV…IFPA), 309 to 329 (SAVL…PLTL), 346 to 366 (WATC…LPGL), 421 to 441 (FIIN…SFFL), 471 to 491 (VHWG…FAFT), 501 to 521 (SYGF…LSLI), 533 to 553 (AFFE…LLYF), and 583 to 603 (LVAA…SAVT). N621 carries an N-linked (GlcNAc...) asparagine glycan. 3 helical membrane-spanning segments follow: residues 653–673 (FVMW…LLQI), 697–717 (SVTG…NYLI), and 733–753 (AAAM…CVVY). N-linked (GlcNAc...) asparagine glycosylation is present at N759.

This sequence belongs to the oligopeptide OPT transporter family.

The protein resides in the membrane. This is an uncharacterized protein from Schizosaccharomyces pombe (strain 972 / ATCC 24843) (Fission yeast).